Here is a 469-residue protein sequence, read N- to C-terminus: Signal recognition particle 54 kDa protein (469 aa).

GTP-binding positions include 104-111, 184-188, and 242-245; these read GLYGSGKT, DTAGR, and TKLD. Disordered regions lie at residues 388 to 410 and 447 to 469; these read ELEN…SGKP and QQGG…PFGD. Residues 448–469 show a composition bias toward gly residues; the sequence is QGGGGGGGMGGMGGGGMGPFGD.

This sequence belongs to the GTP-binding SRP family. SRP54 subfamily. In terms of assembly, part of the signal recognition particle protein translocation system, which is composed of SRP and FtsY. Archaeal SRP consists of a 7S RNA molecule of 300 nucleotides and two protein subunits: SRP54 and SRP19.

It localises to the cytoplasm. It catalyses the reaction GTP + H2O = GDP + phosphate + H(+). Involved in targeting and insertion of nascent membrane proteins into the cytoplasmic membrane. Binds to the hydrophobic signal sequence of the ribosome-nascent chain (RNC) as it emerges from the ribosomes. The SRP-RNC complex is then targeted to the cytoplasmic membrane where it interacts with the SRP receptor FtsY. The polypeptide is Signal recognition particle 54 kDa protein (Haloarcula marismortui (strain ATCC 43049 / DSM 3752 / JCM 8966 / VKM B-1809) (Halobacterium marismortui)).